The chain runs to 414 residues: Putative competence-damage inducible protein (414 aa).

This sequence belongs to the CinA family.

This Listeria monocytogenes serovar 1/2a (strain ATCC BAA-679 / EGD-e) protein is Putative competence-damage inducible protein.